The sequence spans 297 residues: Juvenile hormone acid O-methyltransferase (297 aa).

The protein belongs to the methyltransferase superfamily. As to expression, predominantly expressed in corpora allata. Also expressed at low level in testis.

The enzyme catalyses (2E,6E)-farnesoate + S-adenosyl-L-methionine = methyl (2E,6E)-farnesoate + S-adenosyl-L-homocysteine. It catalyses the reaction juvenile hormone III carboxylate + S-adenosyl-L-methionine = juvenile hormone III + S-adenosyl-L-homocysteine. Its function is as follows. O-methyltransferase that transfers a methyl group from S-adenosyl-L-methionine (SAM) to the carboxyl group of juvenile hormone acids to produce active juvenile hormones in the corpora allata, the last step during juvenile hormone biosynthesis. Also able to methylate farnesoate to methyl farnesoate. This Drosophila melanogaster (Fruit fly) protein is Juvenile hormone acid O-methyltransferase.